A 525-amino-acid chain; its full sequence is Peptide chain release factor 3 (525 aa).

Positions 8 to 276 constitute a tr-type G domain; sequence AMRRTFAIIS…AFVKEAPPPQ (269 aa). GTP-binding positions include 17–24, 85–89, and 139–142; these read SHPDAGKT, DTPGH, and NKMD.

This sequence belongs to the TRAFAC class translation factor GTPase superfamily. Classic translation factor GTPase family. PrfC subfamily.

It is found in the cytoplasm. In terms of biological role, increases the formation of ribosomal termination complexes and stimulates activities of RF-1 and RF-2. It binds guanine nucleotides and has strong preference for UGA stop codons. It may interact directly with the ribosome. The stimulation of RF-1 and RF-2 is significantly reduced by GTP and GDP, but not by GMP. The sequence is that of Peptide chain release factor 3 from Coxiella burnetii (strain CbuK_Q154) (Coxiella burnetii (strain Q154)).